A 453-amino-acid chain; its full sequence is Bifunctional protein GlmU (453 aa).

The pyrophosphorylase stretch occupies residues 1–231 (MERSSLAVIL…EKELTGCNNR (231 aa)). Residues 10–13 (LAAG), K24, Q77, 82–83 (GT), 105–107 (YGD), G143, E157, N172, and N229 contribute to the UDP-N-acetyl-alpha-D-glucosamine site. Residue D107 participates in Mg(2+) binding. N229 is a Mg(2+) binding site. The interval 232–252 (AELAFIERLWQERRRHELMVD) is linker. An N-acetyltransferase region spans residues 253–453 (GVSMIAPETV…AQKEAKKKSS (201 aa)). 2 residues coordinate UDP-N-acetyl-alpha-D-glucosamine: R318 and K336. H348 serves as the catalytic Proton acceptor. 2 residues coordinate UDP-N-acetyl-alpha-D-glucosamine: Y351 and N362. Acetyl-CoA-binding positions include A365, 371-372 (NY), S390, S408, and R425.

In the N-terminal section; belongs to the N-acetylglucosamine-1-phosphate uridyltransferase family. It in the C-terminal section; belongs to the transferase hexapeptide repeat family. Homotrimer. Mg(2+) is required as a cofactor.

The protein localises to the cytoplasm. The enzyme catalyses alpha-D-glucosamine 1-phosphate + acetyl-CoA = N-acetyl-alpha-D-glucosamine 1-phosphate + CoA + H(+). It carries out the reaction N-acetyl-alpha-D-glucosamine 1-phosphate + UTP + H(+) = UDP-N-acetyl-alpha-D-glucosamine + diphosphate. The protein operates within nucleotide-sugar biosynthesis; UDP-N-acetyl-alpha-D-glucosamine biosynthesis; N-acetyl-alpha-D-glucosamine 1-phosphate from alpha-D-glucosamine 6-phosphate (route II): step 2/2. Its pathway is nucleotide-sugar biosynthesis; UDP-N-acetyl-alpha-D-glucosamine biosynthesis; UDP-N-acetyl-alpha-D-glucosamine from N-acetyl-alpha-D-glucosamine 1-phosphate: step 1/1. It participates in bacterial outer membrane biogenesis; LPS lipid A biosynthesis. Catalyzes the last two sequential reactions in the de novo biosynthetic pathway for UDP-N-acetylglucosamine (UDP-GlcNAc). The C-terminal domain catalyzes the transfer of acetyl group from acetyl coenzyme A to glucosamine-1-phosphate (GlcN-1-P) to produce N-acetylglucosamine-1-phosphate (GlcNAc-1-P), which is converted into UDP-GlcNAc by the transfer of uridine 5-monophosphate (from uridine 5-triphosphate), a reaction catalyzed by the N-terminal domain. The chain is Bifunctional protein GlmU from Agrobacterium fabrum (strain C58 / ATCC 33970) (Agrobacterium tumefaciens (strain C58)).